The chain runs to 426 residues: Hemojuvelin (426 aa).

A signal peptide spans 1–35 (MGEPGQSPSPRSSHGSPPTLSTLTLLLLLCGHAHS). Tyr46 carries the phosphotyrosine modification. An N-linked (GlcNAc...) asparagine glycan is attached at Asn118. Positions 119–142 (CSRQGPTAPPPPRGPALPGAGSGL) are disordered. Cystine bridges form between Cys148-Cys230 and Cys167-Cys317. 2 N-linked (GlcNAc...) asparagine glycosylation sites follow: Asn213 and Asn372. A lipid anchor (GPI-anchor amidated aspartate) is attached at Asp400. Positions 401–426 (AGVPLSSATLLAPLLSGLFVLWLCIQ) are cleaved as a propeptide — removed in mature form.

Belongs to the repulsive guidance molecule (RGM) family. In terms of assembly, interacts with BMP2 and BMP4. Interacts with BMP6. Interacts with BMPR1B. Interacts with TMPRSS6. In terms of processing, autocatalytically cleaved at low pH; the two chains remain linked via two disulfide bonds. Also proteolytically processed by TMPRSS6, several fragments being released in the extracellular space; regulates HJV activity in BMP signaling and thefore iron homeostasis. As to expression, adult and fetal liver, heart, and skeletal muscle.

It localises to the cell membrane. Acts as a bone morphogenetic protein (BMP) coreceptor. Through enhancement of BMP signaling regulates hepcidin (HAMP) expression and regulates iron homeostasis. This is Hemojuvelin from Homo sapiens (Human).